Here is a 217-residue protein sequence, read N- to C-terminus: Oxygen regulatory protein NreC (217 aa).

Positions 2-119 (KIVIADDHAV…QLLLAVRTVY (118 aa)) constitute a Response regulatory domain. Aspartate 53 is subject to 4-aspartylphosphate. The 66-residue stretch at 148 to 213 (TNDPFKILSK…ELVEYALKKK (66 aa)) folds into the HTH luxR-type domain. The segment at residues 172–191 (NKDIAEKLFVSVKTVEAHKT) is a DNA-binding region (H-T-H motif).

Phosphorylated by NreB.

It localises to the cytoplasm. In terms of biological role, member of the two-component regulatory system NreB/NreC involved in the control of dissimilatory nitrate/nitrite reduction in response to oxygen. Phosphorylated NreC binds to a GC-rich palindromic sequence at the promoters of the nitrate (narGHJI) and nitrite (nir) reductase operons, as well as the putative nitrate transporter gene narT, and activates their expression. This is Oxygen regulatory protein NreC (nreC) from Staphylococcus haemolyticus (strain JCSC1435).